Reading from the N-terminus, the 78-residue chain is Large ribosomal subunit protein eL38 (78 aa).

This sequence belongs to the eukaryotic ribosomal protein eL38 family. As to quaternary structure, component of the large ribosomal subunit. Mature ribosomes consist of a small (40S) and a large (60S) subunit. The 40S subunit contains about 32 different proteins and 1 molecule of RNA (18S). The 60S subunit contains 45 different proteins and 3 molecules of RNA (25S, 5.8S and 5S).

Its subcellular location is the cytoplasm. Functionally, component of the ribosome, a large ribonucleoprotein complex responsible for the synthesis of proteins in the cell. The small ribosomal subunit (SSU) binds messenger RNAs (mRNAs) and translates the encoded message by selecting cognate aminoacyl-transfer RNA (tRNA) molecules. The large subunit (LSU) contains the ribosomal catalytic site termed the peptidyl transferase center (PTC), which catalyzes the formation of peptide bonds, thereby polymerizing the amino acids delivered by tRNAs into a polypeptide chain. The nascent polypeptides leave the ribosome through a tunnel in the LSU and interact with protein factors that function in enzymatic processing, targeting, and the membrane insertion of nascent chains at the exit of the ribosomal tunnel. This Candida albicans (strain SC5314 / ATCC MYA-2876) (Yeast) protein is Large ribosomal subunit protein eL38.